The primary structure comprises 71 residues: Large ribosomal subunit protein eL38 (71 aa).

Belongs to the eukaryotic ribosomal protein eL38 family.

The polypeptide is Large ribosomal subunit protein eL38 (RpL38) (Argas monolakensis (Mono lake bird tick)).